The chain runs to 84 residues: Kunitz-type serine protease inhibitor B6 (84 aa).

A signal peptide spans M1–S24. The BPTI/Kunitz inhibitor domain occupies C31–C81. 3 disulfides stabilise this stretch: C31-C81, C40-C64, and C56-C77.

This sequence belongs to the venom Kunitz-type family. As to expression, expressed by the venom gland.

It localises to the secreted. In terms of biological role, serine protease inhibitor that inhibits trypsin. The chain is Kunitz-type serine protease inhibitor B6 from Daboia siamensis (Eastern Russel's viper).